A 311-amino-acid chain; its full sequence is 26S proteasome regulatory subunit RPN11 (311 aa).

The 136-residue stretch at 32 to 167 (VYISSLALLK…IDAFRLISPA (136 aa)) folds into the MPN domain. Histidine 114, histidine 116, and aspartate 127 together coordinate Zn(2+). The JAMM motif signature appears at 114–127 (HSHPGFGCWLSSVD).

This sequence belongs to the peptidase M67A family.

In terms of biological role, acts as a regulatory subunit of the 26 proteasome which is involved in the ATP-dependent degradation of ubiquitinated proteins. The protein is 26S proteasome regulatory subunit RPN11 (RPN11) of Eremothecium gossypii (strain ATCC 10895 / CBS 109.51 / FGSC 9923 / NRRL Y-1056) (Yeast).